The following is a 374-amino-acid chain: Pre-B-cell leukemia transcription factor 4 (374 aa).

The PBC domain maps to Pro14 to Asp209. The PBC-A stretch occupies residues Asp21–Gly100. The tract at residues Gly103–Asp209 is PBC-B. Residues Ala210–Met272 constitute a DNA-binding region (homeobox; TALE-type). The interval Gln333 to Asn374 is disordered. Residues Leu341–Thr358 are compositionally biased toward polar residues.

The protein belongs to the TALE/PBX homeobox family.

The protein resides in the nucleus. The protein is Pre-B-cell leukemia transcription factor 4 (PBX4) of Homo sapiens (Human).